The primary structure comprises 396 residues: Inositol hexakisphosphate kinase 3 (396 aa).

Pro206–Gly214 provides a ligand contact to substrate.

Belongs to the inositol phosphokinase (IPK) family. As to expression, highly expressed in cerebellum, brain cortex, kidney, thymus and lung. Detected at lower levels in hippocampus, testis, heart and olfactory bulb.

It localises to the cytoplasm. The enzyme catalyses 1D-myo-inositol hexakisphosphate + ATP = 5-diphospho-1D-myo-inositol 1,2,3,4,6-pentakisphosphate + ADP. It carries out the reaction 1-diphospho-1D-myo-inositol 2,3,4,5,6-pentakisphosphate + ATP + H(+) = 1,5-bis(diphospho)-1D-myo-inositol 2,3,4,6-tetrakisphosphate + ADP. In terms of biological role, converts inositol hexakisphosphate (InsP6) to diphosphoinositol pentakisphosphate (InsP7/PP-InsP5). Converts 1,3,4,5,6-pentakisphosphate (InsP5) to PP-InsP4. The protein is Inositol hexakisphosphate kinase 3 (Ip6k3) of Mus musculus (Mouse).